The chain runs to 229 residues: Zinc finger matrin-type protein 4 (229 aa).

2 consecutive Matrin-type zinc fingers follow at residues 14-44 (SYCK…KVRL) and 72-106 (DKNK…LKLL). The interval 116 to 135 (TATPLSPLKPPRMDTAPVVA) is disordered. Matrin-type zinc fingers lie at residues 145–175 (RYCG…NAAR) and 198–228 (YRCT…NLKN).

Its subcellular location is the nucleus. The polypeptide is Zinc finger matrin-type protein 4 (ZMAT4) (Homo sapiens (Human)).